The following is a 710-amino-acid chain: FAST kinase domain-containing protein 2, mitochondrial (710 aa).

Phosphoserine is present on residues Ser-126 and Ser-140. Residues 634–691 form the RAP domain; that stretch reads VAVLCVSRSAYCLGSSHPRGFLAMKMRHLNAMGFHVILVNNWEMDKLEMEDAVTFLKT. Ser-708 bears the Phosphoserine mark.

The protein belongs to the FAST kinase family. As to quaternary structure, monomer. Found in a complex with GRSF1, DDX28, DHX30 and FASTKD5. Associates with the 16S mitochondrial rRNA (16S mt-rRNA). Forms a regulatory protein-RNA complex, consisting of RCC1L, NGRN, RPUSD3, RPUSD4, TRUB2, FASTKD2 and 16S mt-rRNA. As to expression, expression detected in spleen, thymus, testis, ovary, colon, heart, smooth muscle, kidney, brain, lung, liver and white adipose tissue with highest expression in heart, smooth muscle and thyroid.

It localises to the mitochondrion matrix. The protein localises to the mitochondrion nucleoid. Functionally, plays an important role in assembly of the mitochondrial large ribosomal subunit. As a component of a functional protein-RNA module, consisting of RCC1L, NGRN, RPUSD3, RPUSD4, TRUB2, FASTKD2 and 16S mitochondrial ribosomal RNA (16S mt-rRNA), controls 16S mt-rRNA abundance and is required for intra-mitochondrial translation. May play a role in mitochondrial apoptosis. The polypeptide is FAST kinase domain-containing protein 2, mitochondrial (Homo sapiens (Human)).